The following is a 458-amino-acid chain: MGALGRALLWLQLCALARAAYKLWVPTTDFEAAANWSQNRTPCAGAVVQFPADKAVSVVVRASHGFSDMLLPRDGEFVLASGAGFGAADAGRDPDCGAGAPALFLDPDRFSWHDPRLWRSGDAARGLFSVDAERVPCRHDDVVFPPDASFRVGLGPGARPARVRSVQVLGQTFTRDEDLAAFLASRAGRLRFHGPGALRVGPGACADPSGCVCGDAEVQPWICAALLQPLGGRCPPAACPDALRPEGQCCDLCGAIVSLTHGPTFDIERYRARLLRAFLPQYPGLQAAVSKVRRRPGPHTEVQVVLAETGPQPGGAGRLARALLADVAEHGEALGVLSATARESGAPVGDGSAAGPLGSGSRAGLAGGVAAGLLLLLLALAAGLLLLRRAPRLRWTKRERLVATPVEAPLGFSNPVFDVAGSVGPVPRTPQPPPAQQAGSSSTSRSYFVNPLFAEAEA.

An N-terminal signal peptide occupies residues 1-19 (MGALGRALLWLQLCALARA). Residues 20–366 (AYKLWVPTTD…LGSGSRAGLA (347 aa)) are Extracellular-facing. Asn-35 carries an N-linked (GlcNAc...) asparagine glycan. Cystine bridges form between Cys-43/Cys-96, Cys-137/Cys-213, Cys-205/Cys-211, Cys-223/Cys-249, Cys-234/Cys-250, and Cys-239/Cys-253. An interaction with CUBN region spans residues 67 to 87 (SDMLLPRDGEFVLASGAGFGA). One can recognise a VWFC domain in the interval 203-254 (GACADPSGCVCGDAEVQPWICAALLQPLGGRCPPAACPDALRPEGQCCDLCG). A helical membrane pass occupies residues 367–387 (GGVAAGLLLLLLALAAGLLLL). Residues 388–458 (RRAPRLRWTK…VNPLFAEAEA (71 aa)) lie on the Cytoplasmic side of the membrane. A disordered region spans residues 422-446 (SVGPVPRTPQPPPAQQAGSSSTSRS).

Interacts (via extracellular region) with CUBN/cubilin. This gives rise to a huge complex containing one AMN chain and three CUBN chains. Post-translationally, N-glycosylated. In terms of processing, a soluble form arises by proteolytic removal of the membrane anchor. Detected in kidney (at protein level). Detected in kidney and ileum.

It localises to the apical cell membrane. The protein resides in the cell membrane. It is found in the endosome membrane. Its subcellular location is the membrane. The protein localises to the coated pit. It localises to the secreted. Membrane-bound component of the endocytic receptor formed by AMN and CUBN. Required for normal CUBN glycosylation and trafficking to the cell surface. The complex formed by AMN and CUBN is required for efficient absorption of vitamin B12. Required for normal CUBN-mediated protein transport in the kidney. In Canis lupus familiaris (Dog), this protein is Protein amnionless (AMN).